Here is a 250-residue protein sequence, read N- to C-terminus: Triosephosphate isomerase (250 aa).

Residue N9 to K11 participates in substrate binding. The Electrophile role is filled by H95. E167 functions as the Proton acceptor in the catalytic mechanism. Substrate-binding positions include G173, S213, and G234–G235.

This sequence belongs to the triosephosphate isomerase family. In terms of assembly, homodimer.

Its subcellular location is the cytoplasm. The catalysed reaction is D-glyceraldehyde 3-phosphate = dihydroxyacetone phosphate. Its pathway is carbohydrate biosynthesis; gluconeogenesis. The protein operates within carbohydrate degradation; glycolysis; D-glyceraldehyde 3-phosphate from glycerone phosphate: step 1/1. Involved in the gluconeogenesis. Catalyzes stereospecifically the conversion of dihydroxyacetone phosphate (DHAP) to D-glyceraldehyde-3-phosphate (G3P). The protein is Triosephosphate isomerase of Exiguobacterium sibiricum (strain DSM 17290 / CCUG 55495 / CIP 109462 / JCM 13490 / 255-15).